Consider the following 496-residue polypeptide: Germacrene A hydroxylase (496 aa).

Residues 1–2 lie on the Cytoplasmic side of the membrane; it reads ME. A helical; Signal-anchor for type II membrane protein membrane pass occupies residues 3 to 23; it reads LTLTTSLGLAVFVFILFKLLT. Over 24–496 the chain is Lumenal; the sequence is GSKSTKNSLP…TAYKTANNSA (473 aa). C432 serves as a coordination point for heme. An N-linked (GlcNAc...) asparagine glycan is attached at N493.

This sequence belongs to the cytochrome P450 family. Heme is required as a cofactor.

Its subcellular location is the endoplasmic reticulum membrane. The catalysed reaction is (+)-(R)-germacrene A + 3 reduced [NADPH--hemoprotein reductase] + 3 O2 = germacra-1(10),4,11(13)-trien-12-oate + 3 oxidized [NADPH--hemoprotein reductase] + 4 H2O + 4 H(+). The protein operates within secondary metabolite biosynthesis; terpenoid biosynthesis. Its function is as follows. Involved in the biosynthesis of germacrene-derived sesquiterpene lactones. Catalyzes three consecutive oxidations of germacrene A to produce germacrene A acid. Could also catalyze the three-step oxidation of non-natural substrate amorphadiene to artemisinic acid. This chain is Germacrene A hydroxylase, found in Barnadesia spinosa (Spiny barnadesia).